The following is a 206-amino-acid chain: ATP-dependent Clp protease proteolytic subunit (206 aa).

The active-site Nucleophile is the Ser-107. His-132 is an active-site residue.

The protein belongs to the peptidase S14 family. Fourteen ClpP subunits assemble into 2 heptameric rings which stack back to back to give a disk-like structure with a central cavity, resembling the structure of eukaryotic proteasomes.

It localises to the cytoplasm. It catalyses the reaction Hydrolysis of proteins to small peptides in the presence of ATP and magnesium. alpha-casein is the usual test substrate. In the absence of ATP, only oligopeptides shorter than five residues are hydrolyzed (such as succinyl-Leu-Tyr-|-NHMec, and Leu-Tyr-Leu-|-Tyr-Trp, in which cleavage of the -Tyr-|-Leu- and -Tyr-|-Trp bonds also occurs).. Cleaves peptides in various proteins in a process that requires ATP hydrolysis. Has a chymotrypsin-like activity. Plays a major role in the degradation of misfolded proteins. The chain is ATP-dependent Clp protease proteolytic subunit from Idiomarina loihiensis (strain ATCC BAA-735 / DSM 15497 / L2-TR).